A 105-amino-acid chain; its full sequence is Small ribosomal subunit protein uS10 (105 aa).

The protein belongs to the universal ribosomal protein uS10 family. Part of the 30S ribosomal subunit.

In terms of biological role, involved in the binding of tRNA to the ribosomes. This chain is Small ribosomal subunit protein uS10, found in Oleidesulfovibrio alaskensis (strain ATCC BAA-1058 / DSM 17464 / G20) (Desulfovibrio alaskensis).